The sequence spans 72 residues: Translation initiation factor IF-1 (72 aa).

An S1-like domain is found at 1-72 (MSKEELIEFE…TKGRITYRFK (72 aa)).

This sequence belongs to the IF-1 family. As to quaternary structure, component of the 30S ribosomal translation pre-initiation complex which assembles on the 30S ribosome in the order IF-2 and IF-3, IF-1 and N-formylmethionyl-tRNA(fMet); mRNA recruitment can occur at any time during PIC assembly.

It is found in the cytoplasm. In terms of biological role, one of the essential components for the initiation of protein synthesis. Stabilizes the binding of IF-2 and IF-3 on the 30S subunit to which N-formylmethionyl-tRNA(fMet) subsequently binds. Helps modulate mRNA selection, yielding the 30S pre-initiation complex (PIC). Upon addition of the 50S ribosomal subunit IF-1, IF-2 and IF-3 are released leaving the mature 70S translation initiation complex. This chain is Translation initiation factor IF-1, found in Hyphomonas neptunium (strain ATCC 15444).